We begin with the raw amino-acid sequence, 631 residues long: Phosphomethylpyrimidine synthase (631 aa).

Residues Asn-239, Met-268, Tyr-297, His-333, 353–355, 394–397, and Glu-433 each bind substrate; these read SRG and DGLR. Residue His-437 coordinates Zn(2+). Tyr-460 serves as a coordination point for substrate. A Zn(2+)-binding site is contributed by His-501. 3 residues coordinate [4Fe-4S] cluster: Cys-581, Cys-584, and Cys-589.

Belongs to the ThiC family. In terms of assembly, homodimer. It depends on [4Fe-4S] cluster as a cofactor.

It carries out the reaction 5-amino-1-(5-phospho-beta-D-ribosyl)imidazole + S-adenosyl-L-methionine = 4-amino-2-methyl-5-(phosphooxymethyl)pyrimidine + CO + 5'-deoxyadenosine + formate + L-methionine + 3 H(+). It functions in the pathway cofactor biosynthesis; thiamine diphosphate biosynthesis. Functionally, catalyzes the synthesis of the hydroxymethylpyrimidine phosphate (HMP-P) moiety of thiamine from aminoimidazole ribotide (AIR) in a radical S-adenosyl-L-methionine (SAM)-dependent reaction. In Klebsiella pneumoniae (strain 342), this protein is Phosphomethylpyrimidine synthase.